Reading from the N-terminus, the 186-residue chain is dTTP/UTP pyrophosphatase (186 aa).

The active-site Proton acceptor is D70.

Belongs to the Maf family. YhdE subfamily. Requires a divalent metal cation as cofactor.

It localises to the cytoplasm. The enzyme catalyses dTTP + H2O = dTMP + diphosphate + H(+). It catalyses the reaction UTP + H2O = UMP + diphosphate + H(+). Functionally, nucleoside triphosphate pyrophosphatase that hydrolyzes dTTP and UTP. May have a dual role in cell division arrest and in preventing the incorporation of modified nucleotides into cellular nucleic acids. The sequence is that of dTTP/UTP pyrophosphatase from Vibrio vulnificus (strain CMCP6).